Consider the following 113-residue polypeptide: Nucleoid-associated protein SYNW0027 (113 aa).

It belongs to the YbaB/EbfC family. In terms of assembly, homodimer.

The protein localises to the cytoplasm. It is found in the nucleoid. Binds to DNA and alters its conformation. May be involved in regulation of gene expression, nucleoid organization and DNA protection. This Parasynechococcus marenigrum (strain WH8102) protein is Nucleoid-associated protein SYNW0027.